Here is a 390-residue protein sequence, read N- to C-terminus: MASTEIMTVNMGPQHPSTHGVLRLVVELDGEIIQKITPHIGYLHRGVEKLSEHRTYHQTIPLTDRLDYLAPMHNNLGYVLAVEKLLGIEVPERAQTIRVILAELTRLKSHLVWVACHALDIGAMTVFIYAFREREMVMSLYEKISGARMTSSYFRVGGLSSDVYDGFEKDVREIVDTFPGHFDTYEGLLTKNTIWLNRTVGNGVISAEDAIDYGITGPALRGSGVDWDLRRDNPYSGYEKYQFKVPVGEKCDTFDRYKVRLVEMREAVNIIRQALDSLKPGPVLADAPQVTYPPKENVYNTIEGLIHHFKIASEGFPVPEGEVYQGVENPKGELGYYIVSDGGNKPYRMRIRPPSFVNLGAIEKMAKGSMIADLVAVIGTLDIVLGEIDR.

It belongs to the complex I 49 kDa subunit family. As to quaternary structure, NDH-1 is composed of 14 different subunits. Subunits NuoB, C, D, E, F, and G constitute the peripheral sector of the complex.

It localises to the cell inner membrane. It catalyses the reaction a quinone + NADH + 5 H(+)(in) = a quinol + NAD(+) + 4 H(+)(out). Functionally, NDH-1 shuttles electrons from NADH, via FMN and iron-sulfur (Fe-S) centers, to quinones in the respiratory chain. The immediate electron acceptor for the enzyme in this species is believed to be ubiquinone. Couples the redox reaction to proton translocation (for every two electrons transferred, four hydrogen ions are translocated across the cytoplasmic membrane), and thus conserves the redox energy in a proton gradient. The polypeptide is NADH-quinone oxidoreductase subunit D (Geobacter metallireducens (strain ATCC 53774 / DSM 7210 / GS-15)).